The chain runs to 204 residues: Methylthioribulose-1-phosphate dehydratase (204 aa).

Positions 94 and 96 each coordinate Zn(2+).

Belongs to the aldolase class II family. MtnB subfamily. It depends on Zn(2+) as a cofactor.

It catalyses the reaction 5-(methylsulfanyl)-D-ribulose 1-phosphate = 5-methylsulfanyl-2,3-dioxopentyl phosphate + H2O. Its pathway is amino-acid biosynthesis; L-methionine biosynthesis via salvage pathway; L-methionine from S-methyl-5-thio-alpha-D-ribose 1-phosphate: step 2/6. In terms of biological role, catalyzes the dehydration of methylthioribulose-1-phosphate (MTRu-1-P) into 2,3-diketo-5-methylthiopentyl-1-phosphate (DK-MTP-1-P). The polypeptide is Methylthioribulose-1-phosphate dehydratase (Cronobacter sakazakii (strain ATCC BAA-894) (Enterobacter sakazakii)).